A 286-amino-acid chain; its full sequence is MEADNGGPNSSHASKQRLRWTHELHERFVDAVAQLGGPDRATPKGVLRVMGVQGLTIYHVKSHLQKYRLAKYLPDSSSEGKKTDKKESGDMLSGLDGSSGMQITEALKLQMEVQKRLHEQLEVQRQLQLRIEAQGKYLKKIIEEQQRLSGVLGEPSAPVTGDSDPATPAPTSESPLQDKSGKDCGPDKSLSVDESLSSYREPLTPDSGCNIGSPDESTGEERLSKKPRLVRGAAGYTPDIVVGHPILESGLNTSYHQSDHVLAFDQPSTSLLGAEEQLDKVSGDNL.

One can recognise an HTH myb-type domain in the interval 12 to 72 (HASKQRLRWT…HLQKYRLAKY (61 aa)). The segment at residues 43–68 (PKGVLRVMGVQGLTIYHVKSHLQKYR) is a DNA-binding region (H-T-H motif). Residues 74–97 (PDSSSEGKKTDKKESGDMLSGLDG) are disordered. The segment covering 78-89 (SEGKKTDKKESG) has biased composition (basic and acidic residues). The stretch at 104-124 (TEALKLQMEVQKRLHEQLEVQ) forms a coiled coil. Residues 117–122 (LHEQLE) carry the LHEQLE motif. Residues 152-227 (LGEPSAPVTG…TGEERLSKKP (76 aa)) are disordered.

The protein belongs to the MYB-CC family.

It is found in the nucleus. The protein is Myb family transcription factor PHL7 of Arabidopsis thaliana (Mouse-ear cress).